Here is a 390-residue protein sequence, read N- to C-terminus: Chorismate synthase (390 aa).

Residues arginine 39 and arginine 45 each contribute to the NADP(+) site. FMN contacts are provided by residues 132 to 134 (RSS), 253 to 254 (NA), glycine 298, 313 to 317 (KPIPT), and arginine 339.

The protein belongs to the chorismate synthase family. Homotetramer. FMNH2 is required as a cofactor.

The catalysed reaction is 5-O-(1-carboxyvinyl)-3-phosphoshikimate = chorismate + phosphate. Its pathway is metabolic intermediate biosynthesis; chorismate biosynthesis; chorismate from D-erythrose 4-phosphate and phosphoenolpyruvate: step 7/7. Functionally, catalyzes the anti-1,4-elimination of the C-3 phosphate and the C-6 proR hydrogen from 5-enolpyruvylshikimate-3-phosphate (EPSP) to yield chorismate, which is the branch point compound that serves as the starting substrate for the three terminal pathways of aromatic amino acid biosynthesis. This reaction introduces a second double bond into the aromatic ring system. The polypeptide is Chorismate synthase (Bacillus subtilis (strain 168)).